Here is a 388-residue protein sequence, read N- to C-terminus: LL-diaminopimelate aminotransferase (388 aa).

Substrate is bound by residues tyrosine 16 and glycine 41. Pyridoxal 5'-phosphate-binding positions include tyrosine 70, 104-105 (SK), tyrosine 129, asparagine 179, tyrosine 210, and 239-241 (SLS). The substrate site is built by lysine 105, tyrosine 129, and asparagine 179. Lysine 242 is modified (N6-(pyridoxal phosphate)lysine). Residue arginine 250 coordinates pyridoxal 5'-phosphate. Residue arginine 368 participates in substrate binding.

Belongs to the class-I pyridoxal-phosphate-dependent aminotransferase family. LL-diaminopimelate aminotransferase subfamily. As to quaternary structure, homodimer. The cofactor is pyridoxal 5'-phosphate.

The catalysed reaction is (2S,6S)-2,6-diaminopimelate + 2-oxoglutarate = (S)-2,3,4,5-tetrahydrodipicolinate + L-glutamate + H2O + H(+). The protein operates within amino-acid biosynthesis; L-lysine biosynthesis via DAP pathway; LL-2,6-diaminopimelate from (S)-tetrahydrodipicolinate (aminotransferase route): step 1/1. Functionally, involved in the synthesis of meso-diaminopimelate (m-DAP or DL-DAP), required for both lysine and peptidoglycan biosynthesis. Catalyzes the direct conversion of tetrahydrodipicolinate to LL-diaminopimelate. This is LL-diaminopimelate aminotransferase from Nitratidesulfovibrio vulgaris (strain ATCC 29579 / DSM 644 / CCUG 34227 / NCIMB 8303 / VKM B-1760 / Hildenborough) (Desulfovibrio vulgaris).